The sequence spans 652 residues: DNA ligase (652 aa).

NAD(+) is bound by residues 29-33 (DSDYD), 78-79 (SL), and Glu107. Lys109 acts as the N6-AMP-lysine intermediate in catalysis. 4 residues coordinate NAD(+): Arg130, Glu164, Lys278, and Lys302. Zn(2+) contacts are provided by Cys395, Cys398, Cys413, and Cys418. The region spanning 577–652 (NSDAALFGLT…IEDEDWLRQL (76 aa)) is the BRCT domain.

Belongs to the NAD-dependent DNA ligase family. LigA subfamily. Requires Mg(2+) as cofactor. Mn(2+) serves as cofactor.

The enzyme catalyses NAD(+) + (deoxyribonucleotide)n-3'-hydroxyl + 5'-phospho-(deoxyribonucleotide)m = (deoxyribonucleotide)n+m + AMP + beta-nicotinamide D-nucleotide.. Functionally, DNA ligase that catalyzes the formation of phosphodiester linkages between 5'-phosphoryl and 3'-hydroxyl groups in double-stranded DNA using NAD as a coenzyme and as the energy source for the reaction. It is essential for DNA replication and repair of damaged DNA. The chain is DNA ligase from Streptococcus pyogenes serotype M3 (strain ATCC BAA-595 / MGAS315).